Reading from the N-terminus, the 165-residue chain is 2-C-methyl-D-erythritol 2,4-cyclodiphosphate synthase (165 aa).

Residues Asp13 and His15 each coordinate a divalent metal cation. 4-CDP-2-C-methyl-D-erythritol 2-phosphate contacts are provided by residues 13-15 (DRH) and 39-40 (HS). His47 contributes to the a divalent metal cation binding site. 4-CDP-2-C-methyl-D-erythritol 2-phosphate is bound by residues 61–63 (DIG) and Phe141.

This sequence belongs to the IspF family. As to quaternary structure, homotrimer. The cofactor is a divalent metal cation.

The catalysed reaction is 4-CDP-2-C-methyl-D-erythritol 2-phosphate = 2-C-methyl-D-erythritol 2,4-cyclic diphosphate + CMP. It participates in isoprenoid biosynthesis; isopentenyl diphosphate biosynthesis via DXP pathway; isopentenyl diphosphate from 1-deoxy-D-xylulose 5-phosphate: step 4/6. In terms of biological role, involved in the biosynthesis of isopentenyl diphosphate (IPP) and dimethylallyl diphosphate (DMAPP), two major building blocks of isoprenoid compounds. Catalyzes the conversion of 4-diphosphocytidyl-2-C-methyl-D-erythritol 2-phosphate (CDP-ME2P) to 2-C-methyl-D-erythritol 2,4-cyclodiphosphate (ME-CPP) with a corresponding release of cytidine 5-monophosphate (CMP). The protein is 2-C-methyl-D-erythritol 2,4-cyclodiphosphate synthase of Thermotoga maritima (strain ATCC 43589 / DSM 3109 / JCM 10099 / NBRC 100826 / MSB8).